The primary structure comprises 148 residues: [Ribosomal protein bS18]-alanine N-acetyltransferase (148 aa).

An N-acetyltransferase domain is found at 2-147 (NTISILSTTD…DAIIMALPIS (146 aa)). Acetyl-CoA contacts are provided by residues 69–71 (IAV) and 77–82 (RRGLGR). Catalysis depends on Glu103, which acts as the Proton acceptor. Residue Asn108 coordinates acetyl-CoA. The Proton donor role is filled by Tyr115.

It belongs to the acetyltransferase family. RimI subfamily.

It is found in the cytoplasm. It carries out the reaction N-terminal L-alanyl-[ribosomal protein bS18] + acetyl-CoA = N-terminal N(alpha)-acetyl-L-alanyl-[ribosomal protein bS18] + CoA + H(+). In terms of biological role, acetylates the N-terminal alanine of ribosomal protein bS18. The sequence is that of [Ribosomal protein bS18]-alanine N-acetyltransferase from Salmonella typhimurium (strain LT2 / SGSC1412 / ATCC 700720).